We begin with the raw amino-acid sequence, 270 residues long: 3-methyl-2-oxobutanoate hydroxymethyltransferase (270 aa).

The Mg(2+) site is built by Asp41 and Asp80. 3-methyl-2-oxobutanoate is bound by residues 41-42 (DS), Asp80, and Lys109. Residue Glu111 coordinates Mg(2+). Glu178 (proton acceptor) is an active-site residue.

This sequence belongs to the PanB family. As to quaternary structure, homodecamer; pentamer of dimers. Mg(2+) serves as cofactor.

It localises to the cytoplasm. It carries out the reaction 3-methyl-2-oxobutanoate + (6R)-5,10-methylene-5,6,7,8-tetrahydrofolate + H2O = 2-dehydropantoate + (6S)-5,6,7,8-tetrahydrofolate. The protein operates within cofactor biosynthesis; (R)-pantothenate biosynthesis; (R)-pantoate from 3-methyl-2-oxobutanoate: step 1/2. Catalyzes the reversible reaction in which hydroxymethyl group from 5,10-methylenetetrahydrofolate is transferred onto alpha-ketoisovalerate to form ketopantoate. This chain is 3-methyl-2-oxobutanoate hydroxymethyltransferase, found in Thermotoga neapolitana (strain ATCC 49049 / DSM 4359 / NBRC 107923 / NS-E).